The sequence spans 478 residues: Glycogen synthase (478 aa).

Lys-20 provides a ligand contact to ADP-alpha-D-glucose.

Belongs to the glycosyltransferase 1 family. Bacterial/plant glycogen synthase subfamily.

It catalyses the reaction [(1-&gt;4)-alpha-D-glucosyl](n) + ADP-alpha-D-glucose = [(1-&gt;4)-alpha-D-glucosyl](n+1) + ADP + H(+). It participates in glycan biosynthesis; glycogen biosynthesis. Functionally, synthesizes alpha-1,4-glucan chains using ADP-glucose. In Cereibacter sphaeroides (strain ATCC 17023 / DSM 158 / JCM 6121 / CCUG 31486 / LMG 2827 / NBRC 12203 / NCIMB 8253 / ATH 2.4.1.) (Rhodobacter sphaeroides), this protein is Glycogen synthase.